A 166-amino-acid polypeptide reads, in one-letter code: Ribosome maturation factor RimM (166 aa).

The PRC barrel domain occupies 90-163 (EGEFLVSQII…TVTIELLEGL (74 aa)).

The protein belongs to the RimM family. In terms of assembly, binds ribosomal protein uS19.

The protein localises to the cytoplasm. Functionally, an accessory protein needed during the final step in the assembly of 30S ribosomal subunit, possibly for assembly of the head region. Essential for efficient processing of 16S rRNA. May be needed both before and after RbfA during the maturation of 16S rRNA. It has affinity for free ribosomal 30S subunits but not for 70S ribosomes. The chain is Ribosome maturation factor RimM from Oenococcus oeni (strain ATCC BAA-331 / PSU-1).